The primary structure comprises 413 residues: Tyrosine--tRNA ligase (413 aa).

The 'HIGH' region motif lies at 59 to 68 (PTAPDIHLGH). Residues 243–247 (KMSKS) carry the 'KMSKS' region motif. Lys246 is an ATP binding site. The region spanning 351–411 (LAIGQLLKQA…GKRRFARVTL (61 aa)) is the S4 RNA-binding domain.

It belongs to the class-I aminoacyl-tRNA synthetase family. TyrS type 2 subfamily. As to quaternary structure, homodimer.

Its subcellular location is the cytoplasm. It catalyses the reaction tRNA(Tyr) + L-tyrosine + ATP = L-tyrosyl-tRNA(Tyr) + AMP + diphosphate + H(+). In terms of biological role, catalyzes the attachment of tyrosine to tRNA(Tyr) in a two-step reaction: tyrosine is first activated by ATP to form Tyr-AMP and then transferred to the acceptor end of tRNA(Tyr). This is Tyrosine--tRNA ligase from Burkholderia pseudomallei (strain 1710b).